Reading from the N-terminus, the 293-residue chain is Nucleotide-binding protein CKR_3143 (293 aa).

8–15 (GLSGAGKT) is an ATP binding site. 59 to 62 (DIRG) provides a ligand contact to GTP.

It belongs to the RapZ-like family.

Displays ATPase and GTPase activities. This chain is Nucleotide-binding protein CKR_3143, found in Clostridium kluyveri (strain NBRC 12016).